Here is a 195-residue protein sequence, read N- to C-terminus: MSERTGLVTRKTRETEVNVTLNLDGTGVYWVHTGMPFFDHMLQTFSKHSLFDLELTAQGDLAVDGHHTVEDAGVCLGQAIKKALGDKNGINRFGHAIVPMDDALTMAAVDLSGRGLLVFDAAMPSPRVGDFDTELVEEFFRALAVNGEFNLHIRLLAGSNTHHIIESIFKAVACSLKEAAGMSGGTGIPSTKDTL.

Belongs to the imidazoleglycerol-phosphate dehydratase family.

The protein resides in the cytoplasm. The enzyme catalyses D-erythro-1-(imidazol-4-yl)glycerol 3-phosphate = 3-(imidazol-4-yl)-2-oxopropyl phosphate + H2O. It participates in amino-acid biosynthesis; L-histidine biosynthesis; L-histidine from 5-phospho-alpha-D-ribose 1-diphosphate: step 6/9. The protein is Imidazoleglycerol-phosphate dehydratase of Pelotomaculum thermopropionicum (strain DSM 13744 / JCM 10971 / SI).